Consider the following 311-residue polypeptide: tRNA dimethylallyltransferase (311 aa).

ATP is bound at residue 11-18 (GPTAVGKT). 13-18 (TAVGKT) provides a ligand contact to substrate. Residues 36-39 (DSMQ) form an interaction with substrate tRNA region.

Belongs to the IPP transferase family. In terms of assembly, monomer. The cofactor is Mg(2+).

The catalysed reaction is adenosine(37) in tRNA + dimethylallyl diphosphate = N(6)-dimethylallyladenosine(37) in tRNA + diphosphate. Functionally, catalyzes the transfer of a dimethylallyl group onto the adenine at position 37 in tRNAs that read codons beginning with uridine, leading to the formation of N6-(dimethylallyl)adenosine (i(6)A). The chain is tRNA dimethylallyltransferase from Clostridioides difficile (strain 630) (Peptoclostridium difficile).